Here is a 239-residue protein sequence, read N- to C-terminus: Geranylgeranylglyceryl phosphate synthase (239 aa).

The Mg(2+) site is built by Asp18 and Ser45. Residues 166–172, 197–198, and 219–220 each bind sn-glycerol 1-phosphate; these read YLEAGSG, GG, and GT.

It belongs to the GGGP/HepGP synthase family. Group II subfamily. The cofactor is Mg(2+).

The protein resides in the cytoplasm. It carries out the reaction sn-glycerol 1-phosphate + (2E,6E,10E)-geranylgeranyl diphosphate = sn-3-O-(geranylgeranyl)glycerol 1-phosphate + diphosphate. It functions in the pathway membrane lipid metabolism; glycerophospholipid metabolism. In terms of biological role, prenyltransferase that catalyzes the transfer of the geranylgeranyl moiety of geranylgeranyl diphosphate (GGPP) to the C3 hydroxyl of sn-glycerol-1-phosphate (G1P). This reaction is the first ether-bond-formation step in the biosynthesis of archaeal membrane lipids. The protein is Geranylgeranylglyceryl phosphate synthase of Pyrobaculum islandicum (strain DSM 4184 / JCM 9189 / GEO3).